Consider the following 406-residue polypeptide: MGIPLPKPVMTQLQERYGNAIFRCGSNCVNGYRETMEDAHLTYLTDSWGFFGVFDGHVNDQCSQYLERAWRSAIEKESIPMTDERMKELALRIDQEWMDSGREGGSTGTFFVALKEGNKVHLQVGNVGDSRVVACIDGVCVPLTEDHKPNNEGERQRIENCAGRVENNRVDGSLAVSRAFGDREYKLGSGSQLEQKVIALADVQHKDFTFDSNDFVLLCCDGVFEGNFPNEEVVAYVKQQLETCNDLAEVAGRVCEEAIERGSRDNISCMIVQFKDGSDYAAEPHTTVVPGPFSAPRNSGFRKAYESMADKGNTTVGALLERRYDTLKAAEALTPEETEELSQFENGPEAKLTGAERQKWFSNYFQKLCEAASNGPSDQMERLQSLQQQAGIPLSILLSLMGEQTQ.

The region spanning 23–274 is the PPM-type phosphatase domain; sequence RCGSNCVNGY…DNISCMIVQF (252 aa). Mn(2+)-binding residues include aspartate 55, glycine 56, aspartate 221, and aspartate 265.

The protein belongs to the PP2C family. In terms of assembly, monomer. Mg(2+) serves as cofactor. Mn(2+) is required as a cofactor.

It carries out the reaction O-phospho-L-seryl-[protein] + H2O = L-seryl-[protein] + phosphate. The enzyme catalyses O-phospho-L-threonyl-[protein] + H2O = L-threonyl-[protein] + phosphate. In terms of biological role, enzyme with a broad specificity. The protein is Protein phosphatase 2C of Leishmania chagasi.